Consider the following 50-residue polypeptide: Thymosin beta-4 (50 aa).

The disordered stretch occupies residues 1–50 (MLLPATMSDKPDMAEIEKFDKSKLKKTETQEKNPLPSKETIEQEKQAGES). Ser-8 carries the phosphoserine modification. Residues 9-31 (DKPDMAEIEKFDKSKLKKTETQE) are compositionally biased toward basic and acidic residues. Position 10 is an N6-acetyllysine (Lys-10). At Lys-18 the chain carries N6-acetyllysine; alternate. Lys-18 participates in a covalent cross-link: Glycyl lysine isopeptide (Lys-Gly) (interchain with G-Cter in SUMO2); alternate. Residue Thr-29 is modified to Phosphothreonine. Lys-32 bears the N6-acetyllysine mark. Residue Ser-37 is modified to Phosphoserine. Lys-38 carries the N6-acetyllysine modification. The segment covering 39–50 (ETIEQEKQAGES) has biased composition (basic and acidic residues). Thr-40 carries the phosphothreonine modification. Lys-45 carries the N6-acetyllysine modification.

It belongs to the thymosin beta family. Identified in a complex composed of ACTA1, COBL, GSN AND TMSB4X. Interacts with SERPINB1. Post-translationally, acSDKP is inactivated by ACE, which removes the dipeptide Lys-Pro from its C-terminus. Originally found in thymus but it is widely distributed in many tissues.

The protein localises to the cytoplasm. The protein resides in the cytoskeleton. Its function is as follows. Plays an important role in the organization of the cytoskeleton. Binds to and sequesters actin monomers (G actin) and therefore inhibits actin polymerization. Functionally, potent inhibitor of bone marrow derived stem cell differentiation. Acts by inhibits the entry of hematopoietic pluripotent stem cells into the S-phase. This Mus musculus (Mouse) protein is Thymosin beta-4 (Tmsb4x).